A 292-amino-acid polypeptide reads, in one-letter code: Bifunctional protein FolD (292 aa).

NADP(+)-binding positions include 165–167 (GRS), Ser-190, and Thr-231.

This sequence belongs to the tetrahydrofolate dehydrogenase/cyclohydrolase family. In terms of assembly, homodimer.

The catalysed reaction is (6R)-5,10-methylene-5,6,7,8-tetrahydrofolate + NADP(+) = (6R)-5,10-methenyltetrahydrofolate + NADPH. It catalyses the reaction (6R)-5,10-methenyltetrahydrofolate + H2O = (6R)-10-formyltetrahydrofolate + H(+). It functions in the pathway one-carbon metabolism; tetrahydrofolate interconversion. In terms of biological role, catalyzes the oxidation of 5,10-methylenetetrahydrofolate to 5,10-methenyltetrahydrofolate and then the hydrolysis of 5,10-methenyltetrahydrofolate to 10-formyltetrahydrofolate. The polypeptide is Bifunctional protein FolD (Arthrobacter globiformis).